Consider the following 189-residue polypeptide: Peptidyl-tRNA hydrolase (189 aa).

Tyrosine 15 provides a ligand contact to tRNA. Histidine 20 functions as the Proton acceptor in the catalytic mechanism. Residues phenylalanine 66, asparagine 68, and asparagine 114 each contribute to the tRNA site.

Belongs to the PTH family. As to quaternary structure, monomer.

The protein resides in the cytoplasm. It catalyses the reaction an N-acyl-L-alpha-aminoacyl-tRNA + H2O = an N-acyl-L-amino acid + a tRNA + H(+). Its function is as follows. Hydrolyzes ribosome-free peptidyl-tRNAs (with 1 or more amino acids incorporated), which drop off the ribosome during protein synthesis, or as a result of ribosome stalling. In terms of biological role, catalyzes the release of premature peptidyl moieties from peptidyl-tRNA molecules trapped in stalled 50S ribosomal subunits, and thus maintains levels of free tRNAs and 50S ribosomes. The chain is Peptidyl-tRNA hydrolase from Streptococcus suis (strain 98HAH33).